The primary structure comprises 302 residues: Enolase-phosphatase E1 (302 aa).

The segment covering 1-10 (MSDSRLRRRQ) has biased composition (basic residues). Residues 1-25 (MSDSRLRRRQGTAGTDNKRRADGPH) are disordered. Residues 16–25 (DNKRRADGPH) are compositionally biased toward basic and acidic residues. Residues Asp40 and Glu42 each contribute to the Mg(2+) site. Residues 183 to 184 (SS) and Lys217 contribute to the substrate site. Asp242 is a Mg(2+) binding site.

It belongs to the HAD-like hydrolase superfamily. MasA/MtnC family. As to quaternary structure, monomer. Mg(2+) is required as a cofactor.

It localises to the cytoplasm. The protein resides in the nucleus. It carries out the reaction 5-methylsulfanyl-2,3-dioxopentyl phosphate + H2O = 1,2-dihydroxy-5-(methylsulfanyl)pent-1-en-3-one + phosphate. It participates in amino-acid biosynthesis; L-methionine biosynthesis via salvage pathway; L-methionine from S-methyl-5-thio-alpha-D-ribose 1-phosphate: step 3/6. The protein operates within amino-acid biosynthesis; L-methionine biosynthesis via salvage pathway; L-methionine from S-methyl-5-thio-alpha-D-ribose 1-phosphate: step 4/6. Functionally, bifunctional enzyme that catalyzes the enolization of 2,3-diketo-5-methylthiopentyl-1-phosphate (DK-MTP-1-P) into the intermediate 2-hydroxy-3-keto-5-methylthiopentenyl-1-phosphate (HK-MTPenyl-1-P), which is then dephosphorylated to form the acireductone 1,2-dihydroxy-3-keto-5-methylthiopentene (DHK-MTPene). The sequence is that of Enolase-phosphatase E1 from Branchiostoma floridae (Florida lancelet).